The sequence spans 168 residues: MKPNDKVIIGRLARPYGLRGWIKVVSFTHPIDNLLNHPTWQIQHNNEWQPLKLQAGKLHEPFLVVKLENIDDPETAKHYTNDLIAIERGALGALKEGDYYWTDLIGLAVVNTHGIELGTVDSLIETGSNDVLVVRSKERERLIPYTSYTIQSIDLEKKIIVVEWDADF.

The PRC barrel domain occupies glutamate 96 to phenylalanine 168.

The protein belongs to the RimM family. In terms of assembly, binds ribosomal protein uS19.

The protein resides in the cytoplasm. In terms of biological role, an accessory protein needed during the final step in the assembly of 30S ribosomal subunit, possibly for assembly of the head region. Essential for efficient processing of 16S rRNA. May be needed both before and after RbfA during the maturation of 16S rRNA. It has affinity for free ribosomal 30S subunits but not for 70S ribosomes. The protein is Ribosome maturation factor RimM of Coxiella burnetii (strain Dugway 5J108-111).